A 169-amino-acid chain; its full sequence is 2-C-methyl-D-erythritol 2,4-cyclodiphosphate synthase (169 aa).

A divalent metal cation-binding residues include D13 and H15. Residues 13–15 and 40–41 contribute to the 4-CDP-2-C-methyl-D-erythritol 2-phosphate site; these read DIH and HS. H48 contributes to the a divalent metal cation binding site. 4-CDP-2-C-methyl-D-erythritol 2-phosphate-binding positions include 62–64, 138–141, and R148; these read DIG and TTNE.

The protein belongs to the IspF family. In terms of assembly, homotrimer. Requires a divalent metal cation as cofactor.

The enzyme catalyses 4-CDP-2-C-methyl-D-erythritol 2-phosphate = 2-C-methyl-D-erythritol 2,4-cyclic diphosphate + CMP. It functions in the pathway isoprenoid biosynthesis; isopentenyl diphosphate biosynthesis via DXP pathway; isopentenyl diphosphate from 1-deoxy-D-xylulose 5-phosphate: step 4/6. Its function is as follows. Involved in the biosynthesis of isopentenyl diphosphate (IPP) and dimethylallyl diphosphate (DMAPP), two major building blocks of isoprenoid compounds. Catalyzes the conversion of 4-diphosphocytidyl-2-C-methyl-D-erythritol 2-phosphate (CDP-ME2P) to 2-C-methyl-D-erythritol 2,4-cyclodiphosphate (ME-CPP) with a corresponding release of cytidine 5-monophosphate (CMP). In Akkermansia muciniphila (strain ATCC BAA-835 / DSM 22959 / JCM 33894 / BCRC 81048 / CCUG 64013 / CIP 107961 / Muc), this protein is 2-C-methyl-D-erythritol 2,4-cyclodiphosphate synthase.